The following is a 314-amino-acid chain: Homoserine O-acetyltransferase (314 aa).

The active-site Acyl-thioester intermediate is the C142. Residues K163 and S192 each contribute to the substrate site. The active-site Proton acceptor is the H235. Residue E237 is part of the active site. Position 249 (R249) interacts with substrate.

This sequence belongs to the MetA family.

The protein resides in the cytoplasm. It catalyses the reaction L-homoserine + acetyl-CoA = O-acetyl-L-homoserine + CoA. It functions in the pathway amino-acid biosynthesis; L-methionine biosynthesis via de novo pathway; O-acetyl-L-homoserine from L-homoserine: step 1/1. Functionally, transfers an acetyl group from acetyl-CoA to L-homoserine, forming acetyl-L-homoserine. The chain is Homoserine O-acetyltransferase from Streptococcus pneumoniae (strain JJA).